Reading from the N-terminus, the 303-residue chain is Ribosomal RNA small subunit methyltransferase A (303 aa).

Residues Asn37, Val39, Gly64, Glu85, Asp115, and Asn138 each contribute to the S-adenosyl-L-methionine site.

The protein belongs to the class I-like SAM-binding methyltransferase superfamily. rRNA adenine N(6)-methyltransferase family. RsmA subfamily.

Its subcellular location is the cytoplasm. The catalysed reaction is adenosine(1518)/adenosine(1519) in 16S rRNA + 4 S-adenosyl-L-methionine = N(6)-dimethyladenosine(1518)/N(6)-dimethyladenosine(1519) in 16S rRNA + 4 S-adenosyl-L-homocysteine + 4 H(+). In terms of biological role, specifically dimethylates two adjacent adenosines (A1518 and A1519) in the loop of a conserved hairpin near the 3'-end of 16S rRNA in the 30S particle. May play a critical role in biogenesis of 30S subunits. In Bifidobacterium adolescentis (strain ATCC 15703 / DSM 20083 / NCTC 11814 / E194a), this protein is Ribosomal RNA small subunit methyltransferase A.